The sequence spans 68 residues: MIHPKKLLHIDSVTLKSQLEDGKIRVIIVDGIKQEAWITEAPEHGKTLVETRKGDLARVEFEIGYKLN.

This sequence to B.subtilis YqaO.

In Bacillus subtilis (strain 168), this protein is Phage-like element PBSX protein XtrA (xtrA).